The following is a 162-amino-acid chain: Cyclic pyranopterin monophosphate synthase (162 aa).

Substrate is bound by residues 75-77 (LCH) and 113-114 (ME). The active site involves D128.

This sequence belongs to the MoaC family. As to quaternary structure, homohexamer; trimer of dimers.

The catalysed reaction is (8S)-3',8-cyclo-7,8-dihydroguanosine 5'-triphosphate = cyclic pyranopterin phosphate + diphosphate. The protein operates within cofactor biosynthesis; molybdopterin biosynthesis. Its function is as follows. Catalyzes the conversion of (8S)-3',8-cyclo-7,8-dihydroguanosine 5'-triphosphate to cyclic pyranopterin monophosphate (cPMP). The sequence is that of Cyclic pyranopterin monophosphate synthase from Burkholderia vietnamiensis (strain G4 / LMG 22486) (Burkholderia cepacia (strain R1808)).